Consider the following 311-residue polypeptide: Catabolite control protein B (311 aa).

One can recognise an HTH lacI-type domain in the interval 1 to 56 (MANIKEIARLANVSVSTVSRVLNHHPYVSEEKRKLVHQVMKELDYTPNRTAIDLIR). The H-T-H motif DNA-binding region spans 4–23 (IKEIARLANVSVSTVSRVLN).

Seems to be complexed to phosphorylated HPr.

In terms of biological role, transcriptional regulator involved in catabolite repression of several operons. The chain is Catabolite control protein B (ccpB) from Bacillus subtilis (strain 168).